A 414-amino-acid chain; its full sequence is MFNRQDTLAKTDPDLWAAIQQEDRRQQDHIELIASENYTSPAVMQAQGSQLTNKYAEGYPGKRYYGGCEYVDIVEQLAIDRVKALFGAEAANVQPNSGSQANQAVFMAFLKPGDTIMGMSLAEGGHLTHGMALNMSGKWFNVVAYGLNEKEEIDYEAMERLAREHKPKLIIAGASAYALRIDFERFAKIAKEIGAIFMVDMAHYAGLIAAGLYPNPVPHADVVTSTTHKTLRGPRGGIILMKAEHEKAINSAIFPGLQGGPLMHVIAGKATAFKEAATKDFKRYQEQVIDNALVMCKVLVERGLRIISGRTESHVFLVDLRAKNLTGKEAEALLGRAHITVNKNAIPNDPQKPFVTSGIRIGTPAMTTRGFTELEAEQLAHLIADVLDAPNDEAVVERVKGEVAKLTAKFPVYG.

(6S)-5,6,7,8-tetrahydrofolate is bound by residues leucine 121 and 125–127; that span reads GHL. Lysine 229 carries the post-translational modification N6-(pyridoxal phosphate)lysine.

This sequence belongs to the SHMT family. In terms of assembly, homodimer. Pyridoxal 5'-phosphate serves as cofactor.

It localises to the cytoplasm. It carries out the reaction (6R)-5,10-methylene-5,6,7,8-tetrahydrofolate + glycine + H2O = (6S)-5,6,7,8-tetrahydrofolate + L-serine. It functions in the pathway one-carbon metabolism; tetrahydrofolate interconversion. It participates in amino-acid biosynthesis; glycine biosynthesis; glycine from L-serine: step 1/1. Functionally, catalyzes the reversible interconversion of serine and glycine with tetrahydrofolate (THF) serving as the one-carbon carrier. This reaction serves as the major source of one-carbon groups required for the biosynthesis of purines, thymidylate, methionine, and other important biomolecules. Also exhibits THF-independent aldolase activity toward beta-hydroxyamino acids, producing glycine and aldehydes, via a retro-aldol mechanism. The polypeptide is Serine hydroxymethyltransferase (Thiobacillus denitrificans (strain ATCC 25259 / T1)).